Here is an 846-residue protein sequence, read N- to C-terminus: Protein arginine N-methyltransferase 9 (846 aa).

TPR repeat units lie at residues 25–58 (VARS…APEL), 67–100 (QYTL…FPDD), and 101–134 (EVIC…NPDF). SAM-dependent MTase PRMT-type domains lie at 137 to 466 (AKEN…YLRI) and 530 to 846 (NIPY…AVKP).

This sequence belongs to the class I-like SAM-binding methyltransferase superfamily. Protein arginine N-methyltransferase family. Found in a complex with PRMT9, SF3B2 and SF3B4. Interacts with SF3B2.

It is found in the cytoplasm. The enzyme catalyses L-arginyl-[protein] + 2 S-adenosyl-L-methionine = N(omega),N(omega)'-dimethyl-L-arginyl-[protein] + 2 S-adenosyl-L-homocysteine + 2 H(+). Functionally, arginine methyltransferase that can both catalyze the formation of omega-N monomethylarginine (MMA) and symmetrical dimethylarginine (sDMA). Specifically mediates the symmetrical dimethylation of SF3B2. Involved in the regulation of alternative splicing of pre-mRNA. The sequence is that of Protein arginine N-methyltransferase 9 (Prmt9) from Mus musculus (Mouse).